Here is a 309-residue protein sequence, read N- to C-terminus: Partitioning defective protein 6 (309 aa).

The region spanning 14–96 is the PB1 domain; it reads TLQVKSKFDS…PLLRLLIQRR (83 aa). The Pseudo-CRIB domain occupies 132 to 149; that stretch reads ISNPEDFRQVSAIIDVDI. The region spanning 156-249 is the PDZ domain; it reads RVRLCKHGQE…NLIITVKPAN (94 aa). Over residues 249–270 the composition is skewed to polar residues; sequence NQRNTLSRGPSQQGTPNASEMS. The segment at 249-309 is disordered; that stretch reads NQRNTLSRGP…DANDSDSGED (61 aa).

It belongs to the PAR6 family. In terms of assembly, interacts with par-3, required for its peripheral localization, and with cdc-42, required for the activation of a par-3/par-6/pkc-3 complex. Colocalized with par-3 at all stages in early embryos, at the anterior cortex of the embryo. Patchy expression observed at the periphery after completion of meiosis I and in meiosis II, which on completion of metaphase II, is restricted to the anterior 85% of embryo length; this decreases to 55% in embryos between prophase and telophase of the first mitosis. During the first cleavage, expression is detected in the advancing furrow. Along with pkc-3, is unable to associate with the apical cortex of cells that lack par-3. Transiently coexpressed and colocalized with par-3 and pkc-3, asymmetrically in the developing somatic gonad, including the spermathecal precursor cells of L4 larvae.

The protein resides in the cytoplasm. Its subcellular location is the cell membrane. It is found in the cell junction. It localises to the tight junction. Necessary for apicobasal and anterior-posterior asymmetries associated with cell adhesion and gastrulation during the first few cell cycles of embryogenesis. Required for localizing/ maintaining par-3 at the cell periphery. Regulates mes-1 expression and/or localization pattern during early embryogenesis. Acts together with par-3 and pkc-3 in maintaining epithelial cell polarity in the distal spermatheca. Plays a role in endosome and Golgi body positioning. The protein is Partitioning defective protein 6 of Caenorhabditis elegans.